Here is a 328-residue protein sequence, read N- to C-terminus: Homeobox protein Hox-C13 (328 aa).

The interval 23–48 (AAESGSGGGGGGGGAGGAGGGCSGAS) is disordered. Over residues 27–45 (GSGGGGGGGGAGGAGGGCS) the composition is skewed to gly residues. Residues 258–317 (GRKKRVPYTKVQLKELEKEYAASKFITKEKRRRISATTNLSERQVTIWFQNRRVKEKKVV) constitute a DNA-binding region (homeobox).

This sequence belongs to the Abd-B homeobox family. As to expression, expressed in differentiating keratinocytes. In the hair follicle lower matrix, expressed in all 3 hair shaft-forming compartments, i.e. cuticle, cortex and medulla. Expression stops sharply at the boundary with the germinal matrix compartment.

Its subcellular location is the nucleus. Transcription factor which plays a role in hair follicle differentiation. Regulates FOXQ1 expression and that of other hair-specific genes. The chain is Homeobox protein Hox-C13 (Hoxc13) from Mus musculus (Mouse).